We begin with the raw amino-acid sequence, 258 residues long: Acetylglutamate kinase (258 aa).

Residues 44 to 45 (GG), Arg66, and Asn158 contribute to the substrate site. Residues 181 to 186 (DVSGIL) and 209 to 211 (IIT) each bind ATP.

Belongs to the acetylglutamate kinase family. ArgB subfamily. Homodimer.

The protein resides in the cytoplasm. It carries out the reaction N-acetyl-L-glutamate + ATP = N-acetyl-L-glutamyl 5-phosphate + ADP. It participates in amino-acid biosynthesis; L-arginine biosynthesis; N(2)-acetyl-L-ornithine from L-glutamate: step 2/4. Its function is as follows. Catalyzes the ATP-dependent phosphorylation of N-acetyl-L-glutamate. The protein is Acetylglutamate kinase of Yersinia pestis bv. Antiqua (strain Antiqua).